We begin with the raw amino-acid sequence, 80 residues long: uncharacterized protein (80 aa).

Residues 10–29 (FVAREYPLVVVPFIYFVLFL) form a helical membrane-spanning segment.

The protein localises to the membrane. This is an uncharacterized protein from Saccharomyces cerevisiae (strain ATCC 204508 / S288c) (Baker's yeast).